The sequence spans 297 residues: MPFKDQLFLASQYLAPHHLVSRLMGRVADCRAPEIKNRMIARFVRRYNVDMSEALVEDPLAYASFNDFFTRALKPDARPLDDEPGAALCPADGAISQIGAIDNGRIFQAKGHSFGLTDLLGGDAERAAPFAGGQFATIYLSPRDYHRVHMPLAGTLREMVHVPGRLFSVNPLTARSVPELFARNERVACLFDTEHGPMALVLVGAMIVASIETVWAGLVTPHKRQVRSVRYDAAARAPIHLDKGAEMGRFKLGSTVIVLFGPKRLRWLDLPSVRGPVRMGETLALPASTAISFPESE.

Catalysis depends on charge relay system; for autoendoproteolytic cleavage activity residues D92, H149, and S254. S254 functions as the Schiff-base intermediate with substrate; via pyruvic acid; for decarboxylase activity in the catalytic mechanism. S254 carries the post-translational modification Pyruvic acid (Ser); by autocatalysis.

This sequence belongs to the phosphatidylserine decarboxylase family. PSD-B subfamily. Prokaryotic type I sub-subfamily. In terms of assembly, heterodimer of a large membrane-associated beta subunit and a small pyruvoyl-containing alpha subunit. Pyruvate is required as a cofactor. In terms of processing, is synthesized initially as an inactive proenzyme. Formation of the active enzyme involves a self-maturation process in which the active site pyruvoyl group is generated from an internal serine residue via an autocatalytic post-translational modification. Two non-identical subunits are generated from the proenzyme in this reaction, and the pyruvate is formed at the N-terminus of the alpha chain, which is derived from the carboxyl end of the proenzyme. The autoendoproteolytic cleavage occurs by a canonical serine protease mechanism, in which the side chain hydroxyl group of the serine supplies its oxygen atom to form the C-terminus of the beta chain, while the remainder of the serine residue undergoes an oxidative deamination to produce ammonia and the pyruvoyl prosthetic group on the alpha chain. During this reaction, the Ser that is part of the protease active site of the proenzyme becomes the pyruvoyl prosthetic group, which constitutes an essential element of the active site of the mature decarboxylase.

The protein resides in the cell membrane. The enzyme catalyses a 1,2-diacyl-sn-glycero-3-phospho-L-serine + H(+) = a 1,2-diacyl-sn-glycero-3-phosphoethanolamine + CO2. The protein operates within phospholipid metabolism; phosphatidylethanolamine biosynthesis; phosphatidylethanolamine from CDP-diacylglycerol: step 2/2. Functionally, catalyzes the formation of phosphatidylethanolamine (PtdEtn) from phosphatidylserine (PtdSer). This Bordetella parapertussis (strain 12822 / ATCC BAA-587 / NCTC 13253) protein is Phosphatidylserine decarboxylase proenzyme.